The following is a 99-amino-acid chain: Aspartyl/glutamyl-tRNA(Asn/Gln) amidotransferase subunit C (99 aa).

The protein belongs to the GatC family. As to quaternary structure, heterotrimer of A, B and C subunits.

The catalysed reaction is L-glutamyl-tRNA(Gln) + L-glutamine + ATP + H2O = L-glutaminyl-tRNA(Gln) + L-glutamate + ADP + phosphate + H(+). It carries out the reaction L-aspartyl-tRNA(Asn) + L-glutamine + ATP + H2O = L-asparaginyl-tRNA(Asn) + L-glutamate + ADP + phosphate + 2 H(+). In terms of biological role, allows the formation of correctly charged Asn-tRNA(Asn) or Gln-tRNA(Gln) through the transamidation of misacylated Asp-tRNA(Asn) or Glu-tRNA(Gln) in organisms which lack either or both of asparaginyl-tRNA or glutaminyl-tRNA synthetases. The reaction takes place in the presence of glutamine and ATP through an activated phospho-Asp-tRNA(Asn) or phospho-Glu-tRNA(Gln). This chain is Aspartyl/glutamyl-tRNA(Asn/Gln) amidotransferase subunit C, found in Kineococcus radiotolerans (strain ATCC BAA-149 / DSM 14245 / SRS30216).